Reading from the N-terminus, the 494-residue chain is DnaJ-related protein rsp1 (494 aa).

The J domain maps to 12-78; sequence DYYTILGAES…KLRELFDQRR (67 aa). Polar residues predominate over residues 229 to 242; it reads SEISNGLNSNGVEN. The disordered stretch occupies residues 229-354; that stretch reads SEISNGLNSN…NDSTSNSTEY (126 aa). A compositionally biased stretch (low complexity) spans 243 to 256; that stretch reads SSITKSSPRSSSSS. Over residues 270–287 the composition is skewed to polar residues; it reads IFTSPNTPEHPSVYQTDI. The span at 321-331 shows a compositional bias: low complexity; it reads LSRSKSSSLSR. Positions 332–354 are enriched in polar residues; the sequence is NQTRSQLNDLSAENDSTSNSTEY.

As to quaternary structure, interacts iwth ssa1.

The protein localises to the cytoplasm. Its subcellular location is the cytoskeleton. The protein resides in the nucleus. In terms of biological role, has a role in the proper organization of the interphase microtubule cytoskeleton. Required for equatorial microtubule organizing center (eMTOC) disassembly into satellites, contributing to the dynamic redistribution of MTOC components for organization of interphase microtubules. The polypeptide is DnaJ-related protein rsp1 (rsp1) (Schizosaccharomyces pombe (strain 972 / ATCC 24843) (Fission yeast)).